Here is a 236-residue protein sequence, read N- to C-terminus: Small ribosomal subunit protein uS2c (236 aa).

In terms of assembly, component of the chloroplast small ribosomal subunit (SSU). Mature 70S chloroplast ribosomes of higher plants consist of a small (30S) and a large (50S) subunit. The 30S small subunit contains 1 molecule of ribosomal RNA (16S rRNA) and 24 different proteins. The 50S large subunit contains 3 rRNA molecules (23S, 5S and 4.5S rRNA) and 33 different proteins.

It is found in the plastid. It localises to the chloroplast. Component of the chloroplast ribosome (chloro-ribosome), a dedicated translation machinery responsible for the synthesis of chloroplast genome-encoded proteins, including proteins of the transcription and translation machinery and components of the photosynthetic apparatus. This chain is Small ribosomal subunit protein uS2c (rps2), found in Spinacia oleracea (Spinach).